Reading from the N-terminus, the 325-residue chain is Pyruvate dehydrogenase E1 component subunit beta (325 aa).

Residue Glu60 participates in thiamine diphosphate binding.

Heterodimer of an alpha and a beta chain. The cofactor is thiamine diphosphate.

It is found in the cytoplasm. It localises to the secreted. The catalysed reaction is N(6)-[(R)-lipoyl]-L-lysyl-[protein] + pyruvate + H(+) = N(6)-[(R)-S(8)-acetyldihydrolipoyl]-L-lysyl-[protein] + CO2. With respect to regulation, activity of the E1 module is inhibited by the pyruvate dehydrogenase inhibitor PdhI. Its function is as follows. The pyruvate dehydrogenase complex catalyzes the overall conversion of pyruvate to acetyl-CoA and CO(2). It contains multiple copies of three enzymatic components: pyruvate dehydrogenase (E1), dihydrolipoamide acetyltransferase (E2) and lipoamide dehydrogenase (E3). Functionally, the B.subtilis PDH complex also possesses branched-chain 2-oxoacid dehydrogenase (BCDH) activity. The chain is Pyruvate dehydrogenase E1 component subunit beta from Bacillus subtilis (strain 168).